We begin with the raw amino-acid sequence, 340 residues long: HTH-type transcriptional regulator GalS (340 aa).

Positions 1 to 56 (MITIRDVARQAGVSVATVSRVLNNSALVSPDTRDAVMQAVTLLGYRPNANAQALAT) constitute an HTH lacI-type domain. A DNA-binding region (H-T-H motif) is located at residues 4 to 23 (IRDVARQAGVSVATVSRVLN).

Homodimer.

Repressor of the mgl operon. Binds galactose and D-fucose as inducers. GalS binds to an operator DNA sequence within its own coding sequence. The sequence is that of HTH-type transcriptional regulator GalS (galS) from Salmonella typhimurium (strain LT2 / SGSC1412 / ATCC 700720).